The chain runs to 444 residues: Spermatogenesis-associated protein 1 (444 aa).

Positions 145-160 (GTIHRPDSLSLSKDEP) are enriched in basic and acidic residues. Positions 145–229 (GTIHRPDSLS…DEGEEDDKAT (85 aa)) are disordered. A coiled-coil region spans residues 268-403 (SLLKIEREKI…RKLDTDKMKL (136 aa)).

In terms of assembly, interacts with IFT20.

It is found in the cytoplasmic vesicle. Its subcellular location is the secretory vesicle. The protein localises to the acrosome. The sequence is that of Spermatogenesis-associated protein 1 (Spata1) from Rattus norvegicus (Rat).